Reading from the N-terminus, the 71-residue chain is Large ribosomal subunit protein bL31 (71 aa).

Residues C16, C18, C37, and C40 each coordinate Zn(2+).

The protein belongs to the bacterial ribosomal protein bL31 family. Type A subfamily. In terms of assembly, part of the 50S ribosomal subunit. The cofactor is Zn(2+).

Binds the 23S rRNA. In Pseudomonas putida (strain GB-1), this protein is Large ribosomal subunit protein bL31.